We begin with the raw amino-acid sequence, 280 residues long: Delta(3,5)-Delta(2,4)-dienoyl-CoA isomerase (280 aa).

The active-site Proton donor/acceptor is the Glu-154. A Peroxisome targeting signal (PTS1) motif is present at residues 278–280 (HKL).

Belongs to the enoyl-CoA hydratase/isomerase family.

It is found in the cytoplasm. Its subcellular location is the cytosol. It localises to the peroxisome. It carries out the reaction a (3E,5Z)-dienoyl-CoA = a (2E,4E)-(5,6-saturated)-dienoyl-CoA. Its pathway is lipid metabolism; fatty acid beta-oxidation. In terms of biological role, peroxisomal di-isomerase that is involved in fatty acid metabolism enzyme by converting 3,5-dienoyl-CoAs to the corresponding 2,4-dienoyl-CoAs. Involved in fatty acid beta-oxidation, which is important for lipid droplets degradation and infectious growth. This Pyricularia oryzae (strain 70-15 / ATCC MYA-4617 / FGSC 8958) (Rice blast fungus) protein is Delta(3,5)-Delta(2,4)-dienoyl-CoA isomerase.